The primary structure comprises 417 residues: Probable serine incorporator (417 aa).

10 consecutive transmembrane segments (helical) span residues 25–45 (VYVVFFLLVSIVAYILSYWTF), 69–89 (VVYRLTFGLALYHILLGLVMI), 104–124 (GYWPLKILLLGVLIFVSFFIP), 131–151 (YTWISIFSAAIFIFIQLVLLI), 180–200 (CVLSFGSIALAVAGTVLMLVF), 208–228 (INQFYIVFNLGICLIVGVLSI), 239–259 (SGLFQSGVVMLYCTYLIYSAI), 276–296 (KESTIIIGAVFTIISVCYSAF), 339–359 (FFHFTFACGAMYLSALLTNWA), and 391–411 (VVSSWVVVLLYLWTLIGPILL).

It belongs to the TDE1 family.

It is found in the endoplasmic reticulum membrane. Enhances the incorporation of serine into phosphatidylserine and sphingolipids. The polypeptide is Probable serine incorporator (serinc) (Dictyostelium discoideum (Social amoeba)).